We begin with the raw amino-acid sequence, 128 residues long: Large ribosomal subunit protein bL19 (128 aa).

This sequence belongs to the bacterial ribosomal protein bL19 family.

In terms of biological role, this protein is located at the 30S-50S ribosomal subunit interface and may play a role in the structure and function of the aminoacyl-tRNA binding site. The polypeptide is Large ribosomal subunit protein bL19 (Paracidovorax citrulli (strain AAC00-1) (Acidovorax citrulli)).